Reading from the N-terminus, the 257-residue chain is Diacetyl reductase [(S)-acetoin forming] (257 aa).

6–30 (IITGAAGGLGKGIAERLANDGFNIV) contacts NAD(+). S139 is a binding site for substrate. Y152 serves as the catalytic Proton acceptor. The active site involves K156.

This sequence belongs to the short-chain dehydrogenases/reductases (SDR) family.

It catalyses the reaction (S)-acetoin + NAD(+) = diacetyl + NADH + H(+). Catalyzes the irreversible reduction of 2,3-butanediol to (S)-acetoin in the presence of NADH. This is Diacetyl reductase [(S)-acetoin forming] (butA) from Staphylococcus epidermidis (strain ATCC 12228 / FDA PCI 1200).